Reading from the N-terminus, the 544-residue chain is Chaperonin GroEL (544 aa).

ATP-binding positions include Thr29 to Pro32, Asp86 to Thr90, Gly413, Asn478 to Ala480, and Asp494.

The protein belongs to the chaperonin (HSP60) family. As to quaternary structure, forms a cylinder of 14 subunits composed of two heptameric rings stacked back-to-back. Interacts with the co-chaperonin GroES.

Its subcellular location is the cytoplasm. It catalyses the reaction ATP + H2O + a folded polypeptide = ADP + phosphate + an unfolded polypeptide.. Functionally, together with its co-chaperonin GroES, plays an essential role in assisting protein folding. The GroEL-GroES system forms a nano-cage that allows encapsulation of the non-native substrate proteins and provides a physical environment optimized to promote and accelerate protein folding. This is Chaperonin GroEL from Lysinibacillus sphaericus (strain C3-41).